The following is a 915-amino-acid chain: Protein translocase subunit SecA (915 aa).

Residues Gln-87, 105-109 (GEGKT), and Asp-512 contribute to the ATP site. The tract at residues 881–915 (LPGTAPVRPEPKIGRNEPCPCGSGKKYKHCHGQLN) is disordered. 4 residues coordinate Zn(2+): Cys-899, Cys-901, Cys-910, and His-911. A compositionally biased stretch (basic residues) spans 905 to 915 (KKYKHCHGQLN).

The protein belongs to the SecA family. Monomer and homodimer. Part of the essential Sec protein translocation apparatus which comprises SecA, SecYEG and auxiliary proteins SecDF-YajC and YidC. Zn(2+) is required as a cofactor.

It is found in the cell inner membrane. It localises to the cytoplasm. It carries out the reaction ATP + H2O + cellular proteinSide 1 = ADP + phosphate + cellular proteinSide 2.. Its function is as follows. Part of the Sec protein translocase complex. Interacts with the SecYEG preprotein conducting channel. Has a central role in coupling the hydrolysis of ATP to the transfer of proteins into and across the cell membrane, serving both as a receptor for the preprotein-SecB complex and as an ATP-driven molecular motor driving the stepwise translocation of polypeptide chains across the membrane. The sequence is that of Protein translocase subunit SecA from Azotobacter vinelandii (strain DJ / ATCC BAA-1303).